The following is a 93-amino-acid chain: Protein F-93 (93 aa).

As to quaternary structure, homodimer.

In terms of biological role, probable transcription factor that recognizes a (pseudo-)palindromic DNA target sequence. This chain is Protein F-93, found in Saccharolobus solfataricus (Sulfolobus solfataricus).